We begin with the raw amino-acid sequence, 587 residues long: Kelch-like protein 3 (587 aa).

Position 10 is a phosphoserine (serine 10). Residues 50-117 form the BTB domain; the sequence is CDVMIVAEDV…IYTAEIEVTE (68 aa). A BACK domain is found at 152 to 254; that stretch reads CLGIRAFADV…PRDYLVQTVE (103 aa). Residue threonine 295 is modified to Phosphothreonine. Kelch repeat units follow at residues 302–347, 348–394, 396–441, 442–490, 491–537, and 539–585; these read VMIV…FMAG, HVYA…VLND, LYAV…VVEG, KLYA…VLSG, QLYA…AVNG, and LYVV…VIHK. The residue at position 375 (threonine 375) is a Phosphothreonine. Serine 376 bears the Phosphoserine mark. A Phosphoserine; by PKA and PKC modification is found at serine 433.

The protein belongs to the KLHL3 family. As to quaternary structure, homodimer. Component of the BCR(KLHL3) E3 ubiquitin ligase complex, at least composed of CUL3 and KLHL3 and RBX1. Interacts with CLDN8. In terms of processing, phosphorylation at Ser-433 by PKA or PKC decreases the interaction with WNK1 and WNK4, leading to inhibit their degradation by the BCR(KLHL3) complex. Phosphorylated at Ser-433 by PKC in response to angiotensin II signaling, decreasing ability to promote degradation of WNK1 and WNK4, leading to activation of Na-Cl cotransporter SLC12A3/NCC. Phosphorylation at Ser-433 is increased by insulin. Dephosphorylated at Ser-433 by calcineurin PPP3CA, promoting degradation of WNK1 and WNK4. Widely expressed.

It is found in the cytoplasm. The protein resides in the cytosol. The protein localises to the cytoskeleton. It functions in the pathway protein modification; protein ubiquitination. Functionally, substrate-specific adapter of a BCR (BTB-CUL3-RBX1) E3 ubiquitin ligase complex that acts as a regulator of ion transport in the distal nephron. The BCR(KLHL3) complex acts by mediating ubiquitination and degradation of WNK1 and WNK4, two activators of Na-Cl cotransporter SLC12A3/NCC in distal convoluted tubule cells of kidney, thereby regulating NaCl reabsorption. The BCR(KLHL3) complex also mediates ubiquitination and degradation of WNK3. The BCR(KLHL3) complex also mediates ubiquitination of CLDN8, a tight-junction protein required for paracellular chloride transport in the kidney, leading to its degradation. The sequence is that of Kelch-like protein 3 from Homo sapiens (Human).